A 482-amino-acid chain; its full sequence is Probable cytosol aminopeptidase (482 aa).

Mn(2+)-binding residues include Lys-251 and Asp-256. Lys-263 is a catalytic residue. Mn(2+) is bound by residues Asp-274, Asp-333, and Glu-335. The active site involves Arg-337.

The protein belongs to the peptidase M17 family. It depends on Mn(2+) as a cofactor.

The protein resides in the cytoplasm. The enzyme catalyses Release of an N-terminal amino acid, Xaa-|-Yaa-, in which Xaa is preferably Leu, but may be other amino acids including Pro although not Arg or Lys, and Yaa may be Pro. Amino acid amides and methyl esters are also readily hydrolyzed, but rates on arylamides are exceedingly low.. It carries out the reaction Release of an N-terminal amino acid, preferentially leucine, but not glutamic or aspartic acids.. Its function is as follows. Presumably involved in the processing and regular turnover of intracellular proteins. Catalyzes the removal of unsubstituted N-terminal amino acids from various peptides. The sequence is that of Probable cytosol aminopeptidase from Acinetobacter baylyi (strain ATCC 33305 / BD413 / ADP1).